The primary structure comprises 462 residues: Asparagine--tRNA ligase (462 aa).

Belongs to the class-II aminoacyl-tRNA synthetase family. Homodimer.

Its subcellular location is the cytoplasm. It carries out the reaction tRNA(Asn) + L-asparagine + ATP = L-asparaginyl-tRNA(Asn) + AMP + diphosphate + H(+). The protein is Asparagine--tRNA ligase of Borreliella burgdorferi (strain ATCC 35210 / DSM 4680 / CIP 102532 / B31) (Borrelia burgdorferi).